Reading from the N-terminus, the 260-residue chain is GDNF family receptor alpha-4 (260 aa).

An N-terminal signal peptide occupies residues 1 to 23 (MAHCMESALLLLLLLGSASFTDG). Residue asparagine 184 is glycosylated (N-linked (GlcNAc...) asparagine). A lipid anchor (GPI-anchor amidated threonine) is attached at threonine 237. A propeptide spans 238 to 260 (AGCCFPRVSWLYALTALALQALL) (removed in mature form).

This sequence belongs to the GDNFR family. As to quaternary structure, interacts with ARTN ligand and RET: forms a 2:2:2 ternary complex composed of ARTN ligand, GFRA3 and RET receptor. Interacts with SORL1. As to expression, expressed in many tissues including adrenal medulla, brain neurons, with highest levels in the cerebral cortex and hippocampus. Moderate levels found in the gut circular muscle and myenteric ganglia as well as in other peripheral ganglia, including the sensory dorsal root and trigeminal as well as superior cervical and sympathetic chain ganglia. Isoform a1, isoform a2, isoform b1 and isoform b2 are exclusively found in the thyroid, parthyroid and pituitary glands.

It is found in the cell membrane. The protein localises to the secreted. In terms of biological role, receptor for persephin (PSPN), a growth factor that exhibits neurotrophic activity on mesencephalic dopaminergic and motor neurons. Acts by binding to its coreceptor, GFRA4, leading to autophosphorylation and activation of the RET receptor. May be important in C-cell development and, in the postnatal development of the adrenal medulla. The protein is GDNF family receptor alpha-4 (Gfra4) of Mus musculus (Mouse).